The primary structure comprises 378 residues: MCSPPPYPPQGHHYPPSPHGSYYSPTPYGAAPSPPQSSSPHPRGYHSPSPSWGQLPPRPPQEAQSFGGGAPSNYRFQYSACTGRRKALLIGINYIGQPNQLRGCINDVANVSRYLNERCRYRREDMVILTDDQENPLSIPTKNNILRAMQWLVKDAQPNDSLFIHFSGHGGRTPDLDGDEEDGYDDVIYPVDYRTAGHIVDDEMHAIMVRPLRPGVRLTAIFDSCHSGTALDLPYVYSTQGVLKEPNLAKEAAMDLFSAISSYGQGDLTGMAKTAIGFFKKAAIGDSARQRTVMTKTSPADVVMFSGSKDTQTSADTFQDGEARGALSWAFVKTLQERPHQSYLQLLNSIRAELEGKYTQKPQLSCSHPLDVNLLFVM.

The segment at 1–70 (MCSPPPYPPQ…QEAQSFGGGA (70 aa)) is disordered. Residues 10 to 29 (QGHHYPPSPHGSYYSPTPYG) show a composition bias toward low complexity. Residues H169 and C225 contribute to the active site.

Belongs to the peptidase C14B family.

Involved in cell death (apoptosis). The sequence is that of Metacaspase-1B (casB) from Aspergillus terreus (strain NIH 2624 / FGSC A1156).